Here is a 129-residue protein sequence, read N- to C-terminus: Small ribosomal subunit protein uS11 (129 aa).

This sequence belongs to the universal ribosomal protein uS11 family. As to quaternary structure, part of the 30S ribosomal subunit. Interacts with proteins S7 and S18. Binds to IF-3.

Functionally, located on the platform of the 30S subunit, it bridges several disparate RNA helices of the 16S rRNA. Forms part of the Shine-Dalgarno cleft in the 70S ribosome. This chain is Small ribosomal subunit protein uS11, found in Dechloromonas aromatica (strain RCB).